The primary structure comprises 169 residues: uncharacterized protein (169 aa).

3 consecutive transmembrane segments (helical) span residues 25 to 45 (ALMGLFEGGFVADLVLWMSYF), 57 to 77 (FFWVTLSLTQIITSIVAFGVF), and 91 to 111 (LFLIERIFTLVIGISAYFLMV).

This sequence belongs to the major facilitator superfamily. Allantoate permease family.

Its subcellular location is the membrane. This is an uncharacterized protein from Saccharomyces cerevisiae (strain ATCC 204508 / S288c) (Baker's yeast).